A 98-amino-acid polypeptide reads, in one-letter code: Small ribosomal subunit protein bS6 (98 aa).

It belongs to the bacterial ribosomal protein bS6 family.

Binds together with bS18 to 16S ribosomal RNA. This Staphylococcus aureus (strain NCTC 8325 / PS 47) protein is Small ribosomal subunit protein bS6.